Here is a 176-residue protein sequence, read N- to C-terminus: 3-hydroxydecanoyl-[acyl-carrier-protein] dehydratase (176 aa).

His-71 is a catalytic residue.

It belongs to the thioester dehydratase family. FabA subfamily. As to quaternary structure, homodimer.

It is found in the cytoplasm. It catalyses the reaction a (3R)-hydroxyacyl-[ACP] = a (2E)-enoyl-[ACP] + H2O. It carries out the reaction (3R)-hydroxydecanoyl-[ACP] = (2E)-decenoyl-[ACP] + H2O. The enzyme catalyses (2E)-decenoyl-[ACP] = (3Z)-decenoyl-[ACP]. Its pathway is lipid metabolism; fatty acid biosynthesis. In terms of biological role, necessary for the introduction of cis unsaturation into fatty acids. Catalyzes the dehydration of (3R)-3-hydroxydecanoyl-ACP to E-(2)-decenoyl-ACP and then its isomerization to Z-(3)-decenoyl-ACP. Can catalyze the dehydratase reaction for beta-hydroxyacyl-ACPs with saturated chain lengths up to 16:0, being most active on intermediate chain length. The polypeptide is 3-hydroxydecanoyl-[acyl-carrier-protein] dehydratase (Afipia carboxidovorans (strain ATCC 49405 / DSM 1227 / KCTC 32145 / OM5) (Oligotropha carboxidovorans)).